Here is a 565-residue protein sequence, read N- to C-terminus: Proline--tRNA ligase (565 aa).

This sequence belongs to the class-II aminoacyl-tRNA synthetase family. ProS type 1 subfamily. Homodimer.

The protein resides in the cytoplasm. The catalysed reaction is tRNA(Pro) + L-proline + ATP = L-prolyl-tRNA(Pro) + AMP + diphosphate. Catalyzes the attachment of proline to tRNA(Pro) in a two-step reaction: proline is first activated by ATP to form Pro-AMP and then transferred to the acceptor end of tRNA(Pro). As ProRS can inadvertently accommodate and process non-cognate amino acids such as alanine and cysteine, to avoid such errors it has two additional distinct editing activities against alanine. One activity is designated as 'pretransfer' editing and involves the tRNA(Pro)-independent hydrolysis of activated Ala-AMP. The other activity is designated 'posttransfer' editing and involves deacylation of mischarged Ala-tRNA(Pro). The misacylated Cys-tRNA(Pro) is not edited by ProRS. In Francisella tularensis subsp. holarctica (strain FTNF002-00 / FTA), this protein is Proline--tRNA ligase.